The chain runs to 208 residues: KPDVLPFIDNLLRFVQAGSEVSALLGRMPSAVGYQPTLGTEMGSSQERITSTKDGSITSIQAVYVPADDPTDPAPATTSAHLDATTVLSRGLAAKGIYPAVDPLDSTSTMSQPWIVGEEHYETAQGVKQTLQRYKELQDIIAILGLDELSEEDRLTVARARKIERFLSQPSFVAEVFTGSPGKYVSLPETIKGFQMILPGXLDNLPEQ.

It belongs to the ATPase alpha/beta chains family. In terms of assembly, F-type ATPases have 2 components, CF(1) - the catalytic core - and CF(0) - the membrane proton channel. CF(1) has five subunits: alpha(3), beta(3), gamma(1), delta(1), epsilon(1). CF(0) has four main subunits: a(1), b(1), b'(1) and c(9-12).

The protein resides in the plastid. Its subcellular location is the chloroplast thylakoid membrane. It carries out the reaction ATP + H2O + 4 H(+)(in) = ADP + phosphate + 5 H(+)(out). Produces ATP from ADP in the presence of a proton gradient across the membrane. The catalytic sites are hosted primarily by the beta subunits. The sequence is that of ATP synthase subunit beta, chloroplastic (atpB) from Hypolepis hostilis (Fern).